A 242-amino-acid chain; its full sequence is Phosphoribosylaminoimidazole-succinocarboxamide synthase (242 aa).

The protein belongs to the SAICAR synthetase family.

The catalysed reaction is 5-amino-1-(5-phospho-D-ribosyl)imidazole-4-carboxylate + L-aspartate + ATP = (2S)-2-[5-amino-1-(5-phospho-beta-D-ribosyl)imidazole-4-carboxamido]succinate + ADP + phosphate + 2 H(+). Its pathway is purine metabolism; IMP biosynthesis via de novo pathway; 5-amino-1-(5-phospho-D-ribosyl)imidazole-4-carboxamide from 5-amino-1-(5-phospho-D-ribosyl)imidazole-4-carboxylate: step 1/2. In Prochlorococcus marinus (strain MIT 9303), this protein is Phosphoribosylaminoimidazole-succinocarboxamide synthase.